Here is a 633-residue protein sequence, read N- to C-terminus: Threonine--tRNA ligase (633 aa).

The 61-residue stretch at 1-61 (MPAIRLPDGS…DHDVDLAIVT (61 aa)) folds into the TGS domain. Residues 242 to 533 (DHRKLGRQLD…LIEHHAGAMP (292 aa)) are catalytic. Residues Cys-333, His-384, and His-510 each contribute to the Zn(2+) site.

Belongs to the class-II aminoacyl-tRNA synthetase family. As to quaternary structure, homodimer. Zn(2+) is required as a cofactor.

The protein resides in the cytoplasm. The enzyme catalyses tRNA(Thr) + L-threonine + ATP = L-threonyl-tRNA(Thr) + AMP + diphosphate + H(+). In terms of biological role, catalyzes the attachment of threonine to tRNA(Thr) in a two-step reaction: L-threonine is first activated by ATP to form Thr-AMP and then transferred to the acceptor end of tRNA(Thr). Also edits incorrectly charged L-seryl-tRNA(Thr). The chain is Threonine--tRNA ligase from Laribacter hongkongensis (strain HLHK9).